A 277-amino-acid polypeptide reads, in one-letter code: Large ribosomal subunit protein uL2 (277 aa).

A disordered region spans residues 223–277; it reads VVMNPIDHPHGGGEGRTSGGRHPVTPWGKPTKGKKTRSNKSTNKFILISRHKRKK.

It belongs to the universal ribosomal protein uL2 family. In terms of assembly, part of the 50S ribosomal subunit. Forms a bridge to the 30S subunit in the 70S ribosome.

One of the primary rRNA binding proteins. Required for association of the 30S and 50S subunits to form the 70S ribosome, for tRNA binding and peptide bond formation. It has been suggested to have peptidyltransferase activity; this is somewhat controversial. Makes several contacts with the 16S rRNA in the 70S ribosome. The polypeptide is Large ribosomal subunit protein uL2 (Nitrobacter hamburgensis (strain DSM 10229 / NCIMB 13809 / X14)).